The chain runs to 396 residues: Tyrosine--tRNA ligase (396 aa).

The 'HIGH' region motif lies at 43–52 (PSSPDIHLGH). The 'KMSKS' region signature appears at 227 to 231 (KMSKS). K230 is an ATP binding site. The S4 RNA-binding domain maps to 338-396 (TGVIDFIILSGLAKSKSEARRLLEQGAVEINSEKISDQNTPVKCGDIIKAGKRRYSKAI).

The protein belongs to the class-I aminoacyl-tRNA synthetase family. TyrS type 2 subfamily. Homodimer.

Its subcellular location is the cytoplasm. It carries out the reaction tRNA(Tyr) + L-tyrosine + ATP = L-tyrosyl-tRNA(Tyr) + AMP + diphosphate + H(+). Catalyzes the attachment of tyrosine to tRNA(Tyr) in a two-step reaction: tyrosine is first activated by ATP to form Tyr-AMP and then transferred to the acceptor end of tRNA(Tyr). This Dehalococcoides mccartyi (strain CBDB1) protein is Tyrosine--tRNA ligase.